We begin with the raw amino-acid sequence, 41 residues long: uncharacterized protein (41 aa).

Residues 1–41 are disordered; sequence MGKKHRNRITGQKKNNHIPEKDIIAAEEAHGKEYSAAKRKP. Residues 17-41 show a composition bias toward basic and acidic residues; the sequence is HIPEKDIIAAEEAHGKEYSAAKRKP.

This is an uncharacterized protein from Bacillus subtilis (strain 168).